Consider the following 369-residue polypeptide: tRNA(Met) cytidine acetate ligase (369 aa).

ATP contacts are provided by residues 7–20 (VAEF…HKYL), Gly-96, Asn-152, and Arg-175.

Belongs to the TmcAL family.

It localises to the cytoplasm. The catalysed reaction is cytidine(34) in elongator tRNA(Met) + acetate + ATP = N(4)-acetylcytidine(34) in elongator tRNA(Met) + AMP + diphosphate. Catalyzes the formation of N(4)-acetylcytidine (ac(4)C) at the wobble position of elongator tRNA(Met), using acetate and ATP as substrates. First activates an acetate ion to form acetyladenylate (Ac-AMP) and then transfers the acetyl group to tRNA to form ac(4)C34. The chain is tRNA(Met) cytidine acetate ligase from Streptococcus agalactiae serotype III (strain NEM316).